Reading from the N-terminus, the 121-residue chain is Large ribosomal subunit protein bL12 (121 aa).

Belongs to the bacterial ribosomal protein bL12 family. Homodimer. Part of the ribosomal stalk of the 50S ribosomal subunit. Forms a multimeric L10(L12)X complex, where L10 forms an elongated spine to which 2 to 4 L12 dimers bind in a sequential fashion. Binds GTP-bound translation factors.

Forms part of the ribosomal stalk which helps the ribosome interact with GTP-bound translation factors. Is thus essential for accurate translation. This is Large ribosomal subunit protein bL12 from Malacoplasma penetrans (strain HF-2) (Mycoplasma penetrans).